A 294-amino-acid chain; its full sequence is MVLSSNWLSLQKSTDSDSVNKNKGGKKTKSNSKKRTVSVKKDKQYVDKKKKNGTGSKIMDMVANMNREIAKVEQERTKNTHADGQMINSEDRFESVLKQKLNEDVAKKSLSRTNGVGKYVSMDCEFVGVGPDGKDSALARVSIVNYYGNVVLDLFVRPKEPVTDWRTWVSGIKPHHMANAVTQEDCQKQVSNVLKGRILVGHSVHHDLTALMLSHPRRMIRDTSRHMPFRQKYSEGKTPSLKKLTKEILQLDIQDGEHSSIEDARATMLLYKSDKLEFEKLHNKQFGPSKPTQE.

Positions 1–13 (MVLSSNWLSLQKS) are enriched in polar residues. Residues 1-56 (MVLSSNWLSLQKSTDSDSVNKNKGGKKTKSNSKKRTVSVKKDKQYVDKKKKNGTGS) are disordered. Basic residues predominate over residues 23-38 (KGGKKTKSNSKKRTVS). Residues 119-271 (YVSMDCEFVG…EDARATMLLY (153 aa)) enclose the Exonuclease domain.

It belongs to the REXO4 family.

It localises to the nucleus. In terms of biological role, exoribonuclease involved in ribosome biosynthesis. Involved in the processing of ITS1, the internal transcribed spacer localized between the 18S and 5.8S rRNAs. The chain is RNA exonuclease 4 (REX4) from Kluyveromyces lactis (strain ATCC 8585 / CBS 2359 / DSM 70799 / NBRC 1267 / NRRL Y-1140 / WM37) (Yeast).